We begin with the raw amino-acid sequence, 312 residues long: Glyoxylate/hydroxypyruvate reductase A (312 aa).

Arginine 227 is an active-site residue. Histidine 275 acts as the Proton donor in catalysis.

Belongs to the D-isomer specific 2-hydroxyacid dehydrogenase family. GhrA subfamily.

Its subcellular location is the cytoplasm. The catalysed reaction is glycolate + NADP(+) = glyoxylate + NADPH + H(+). It catalyses the reaction (R)-glycerate + NAD(+) = 3-hydroxypyruvate + NADH + H(+). It carries out the reaction (R)-glycerate + NADP(+) = 3-hydroxypyruvate + NADPH + H(+). Its function is as follows. Catalyzes the NADPH-dependent reduction of glyoxylate and hydroxypyruvate into glycolate and glycerate, respectively. In Salmonella paratyphi C (strain RKS4594), this protein is Glyoxylate/hydroxypyruvate reductase A.